The following is an 86-amino-acid chain: Putative membrane protein insertion efficiency factor (86 aa).

Belongs to the UPF0161 family.

The protein resides in the cell inner membrane. Functionally, could be involved in insertion of integral membrane proteins into the membrane. This Ruegeria sp. (strain TM1040) (Silicibacter sp.) protein is Putative membrane protein insertion efficiency factor.